A 382-amino-acid polypeptide reads, in one-letter code: Lipid-A-disaccharide synthase (382 aa).

This sequence belongs to the LpxB family.

It catalyses the reaction 2-N,3-O-bis[(3R)-3-hydroxytetradecanoyl]-alpha-D-glucosaminyl 1-phosphate + UDP-2-N,3-O-bis[(3R)-3-hydroxytetradecanoyl]-alpha-D-glucosamine = lipid A disaccharide (E. coli) + UDP + H(+). The catalysed reaction is a lipid X + a UDP-2-N,3-O-bis[(3R)-3-hydroxyacyl]-alpha-D-glucosamine = a lipid A disaccharide + UDP + H(+). Its pathway is glycolipid biosynthesis; lipid IV(A) biosynthesis; lipid IV(A) from (3R)-3-hydroxytetradecanoyl-[acyl-carrier-protein] and UDP-N-acetyl-alpha-D-glucosamine: step 5/6. Functionally, condensation of UDP-2,3-diacylglucosamine and 2,3-diacylglucosamine-1-phosphate to form lipid A disaccharide, a precursor of lipid A, a phosphorylated glycolipid that anchors the lipopolysaccharide to the outer membrane of the cell. This chain is Lipid-A-disaccharide synthase, found in Escherichia coli (strain K12 / MC4100 / BW2952).